Here is a 167-residue protein sequence, read N- to C-terminus: Iron-sulfur cluster assembly protein 1 (167 aa).

Residues 1-50 constitute a mitochondrion transit peptide; the sequence is MMLKQAAKKALGLTSRQSTPWSVGILRTYHENVIDHYDNPRNVGSFDKND.

The protein belongs to the NifU family. As to quaternary structure, component of the core Fe-S cluster (ISC) assembly machinery. Interacts with HSCB. [2Fe-2S] cluster is required as a cofactor. In terms of tissue distribution, expressed in roots, stems, leaves, flowers, pollen and siliques.

The protein localises to the mitochondrion matrix. It is found in the cytoplasm. The protein resides in the cytosol. Its pathway is cofactor biosynthesis; iron-sulfur cluster biosynthesis. Its function is as follows. Scaffold protein for the de novo synthesis of iron-sulfur (Fe-S) clusters within mitochondria, which is required for maturation of both mitochondrial and cytoplasmic [2Fe-2S] and [4Fe-4S] proteins. First, a [2Fe-2S] cluster is transiently assembled on the scaffold protein ISCU (ISU1, ISU2 or ISU3). In a second step, the cluster is released from ISCU, transferred to a glutaredoxin, followed by the formation of mitochondrial [2Fe-2S] proteins, the synthesis of [4Fe-4S] clusters and their target-specific insertion into the recipient apoproteins. Cluster assembly on ISCU depends on the function of the cysteine desulfurase complex NFS1-ISD11, which serves as the sulfur donor for cluster synthesis, the iron-binding protein frataxin as the putative iron donor, and the electron transfer chain comprised of ferredoxin reductase and ferredoxin, which receive their electrons from NADH. The polypeptide is Iron-sulfur cluster assembly protein 1 (ISU1) (Arabidopsis thaliana (Mouse-ear cress)).